The chain runs to 699 residues: Extracellular matrix protein 2 (699 aa).

The first 20 residues, 1-20, serve as a signal peptide directing secretion; it reads MKIAVLFCFFLLIIFQTDFG. In terms of domain architecture, VWFC spans 101 to 158; the sequence is GHCLVKGITMYNKAVWSPEPCTTCLCSDGRVLCDETMCHPQRCPQTVIPEGECCPVCS. Basic and acidic residues predominate over residues 176 to 186; that stretch reads EFSGDSSEQRE. The tract at residues 176–316 is disordered; the sequence is EFSGDSSEQR…PAPPRGTLRL (141 aa). The segment covering 212–224 has biased composition (acidic residues); sequence QSEEDEEVKEEDT. The span at 243–260 shows a compositional bias: basic and acidic residues; it reads GDSRGGDRKQRPGEERRL. Residues 270–291 are compositionally biased toward acidic residues; it reads EEEEDEEEEGEEGEEDEEDEED. A Cell attachment site motif is present at residues 294-296; that stretch reads RGD. The LRRNT domain maps to 307–344; that stretch reads PAPPRGTLRLPSGCSLSYRTISCINAMLTQIPPLTAPQ. LRR repeat units lie at residues 368-388, 394-415, 416-436, 439-459, 465-484, 486-507, 510-530, 536-557, 558-578, 582-602, 609-630, 632-653, and 661-684; these read NLER…GPKA, KLMR…LPST, LEEL…SLSD, QLVT…NPLA, SLAY…QGLP, SIEE…CFNH, KINV…APLA, NLES…LPKS, LLHL…VFGH, GLEY…DRVS, SLRE…IQEM, ALHF…EICN, and NLEH…TFSC. The N-linked (GlcNAc...) asparagine glycan is linked to Asn-378. Asn-449 carries N-linked (GlcNAc...) asparagine glycosylation. The N-linked (GlcNAc...) asparagine glycan is linked to Asn-506.

Belongs to the small leucine-rich proteoglycan (SLRP) family. SLRP class I subfamily. As to quaternary structure, interacts with numerous extracellular matrix proteins. Interacts with MSL1 and RASSF1. As to expression, expressed predominantly in adipose tissue as well as female-specific organs such as mammary gland, ovary, and uterus.

Its subcellular location is the secreted. The protein resides in the extracellular space. It localises to the extracellular matrix. In terms of biological role, promotes matrix assembly and cell adhesiveness. This Homo sapiens (Human) protein is Extracellular matrix protein 2 (ECM2).